The sequence spans 184 residues: Large ribosomal subunit protein uL6 (184 aa).

It belongs to the universal ribosomal protein uL6 family. As to quaternary structure, part of the 50S ribosomal subunit.

In terms of biological role, this protein binds to the 23S rRNA, and is important in its secondary structure. It is located near the subunit interface in the base of the L7/L12 stalk, and near the tRNA binding site of the peptidyltransferase center. This Desulfitobacterium hafniense (strain Y51) protein is Large ribosomal subunit protein uL6.